The sequence spans 303 residues: ATP synthase gamma chain (303 aa).

It belongs to the ATPase gamma chain family. As to quaternary structure, F-type ATPases have 2 components, CF(1) - the catalytic core - and CF(0) - the membrane proton channel. CF(1) has five subunits: alpha(3), beta(3), gamma(1), delta(1), epsilon(1). CF(0) has three main subunits: a, b and c.

The protein resides in the cell inner membrane. Produces ATP from ADP in the presence of a proton gradient across the membrane. The gamma chain is believed to be important in regulating ATPase activity and the flow of protons through the CF(0) complex. The protein is ATP synthase gamma chain of Bartonella henselae (strain ATCC 49882 / DSM 28221 / CCUG 30454 / Houston 1) (Rochalimaea henselae).